We begin with the raw amino-acid sequence, 425 residues long: Histidinol dehydrogenase (425 aa).

Residues Tyr124, Gln184, and Asn207 each coordinate NAD(+). Substrate-binding residues include Ser230, Gln252, and His255. Residues Gln252 and His255 each coordinate Zn(2+). Catalysis depends on proton acceptor residues Glu321 and His322. Substrate-binding residues include His322, Asp355, Glu409, and His414. Asp355 serves as a coordination point for Zn(2+). Residue His414 coordinates Zn(2+).

The protein belongs to the histidinol dehydrogenase family. Zn(2+) serves as cofactor.

It carries out the reaction L-histidinol + 2 NAD(+) + H2O = L-histidine + 2 NADH + 3 H(+). Its pathway is amino-acid biosynthesis; L-histidine biosynthesis; L-histidine from 5-phospho-alpha-D-ribose 1-diphosphate: step 9/9. Functionally, catalyzes the sequential NAD-dependent oxidations of L-histidinol to L-histidinaldehyde and then to L-histidine. This chain is Histidinol dehydrogenase, found in Halobacterium salinarum (strain ATCC 700922 / JCM 11081 / NRC-1) (Halobacterium halobium).